Here is a 272-residue protein sequence, read N- to C-terminus: HMP-PP phosphatase (272 aa).

D8 functions as the Nucleophile in the catalytic mechanism. Mg(2+)-binding residues include D8, D10, and D212.

It belongs to the HAD-like hydrolase superfamily. Cof family. It depends on Mg(2+) as a cofactor.

The enzyme catalyses 4-amino-2-methyl-5-(diphosphooxymethyl)pyrimidine + H2O = 4-amino-2-methyl-5-(phosphooxymethyl)pyrimidine + phosphate + H(+). Functionally, catalyzes the hydrolysis of 4-amino-2-methyl-5-hydroxymethylpyrimidine pyrophosphate (HMP-PP) to 4-amino-2-methyl-5-hydroxymethylpyrimidine phosphate (HMP-P). The sequence is that of HMP-PP phosphatase from Cronobacter sakazakii (strain ATCC BAA-894) (Enterobacter sakazakii).